We begin with the raw amino-acid sequence, 37 residues long: Cytochrome b6-f complex subunit 5 (37 aa).

The chain crosses the membrane as a helical span at residues 5-25 (LLSGIVLGMIPVTLAGLFVTA).

This sequence belongs to the PetG family. As to quaternary structure, the 4 large subunits of the cytochrome b6-f complex are cytochrome b6, subunit IV (17 kDa polypeptide, PetD), cytochrome f and the Rieske protein, while the 4 small subunits are PetG, PetL, PetM and PetN. The complex functions as a dimer.

Its subcellular location is the plastid. The protein resides in the chloroplast thylakoid membrane. Functionally, component of the cytochrome b6-f complex, which mediates electron transfer between photosystem II (PSII) and photosystem I (PSI), cyclic electron flow around PSI, and state transitions. PetG is required for either the stability or assembly of the cytochrome b6-f complex. The sequence is that of Cytochrome b6-f complex subunit 5 from Staurastrum punctulatum (Green alga).